The sequence spans 270 residues: Putative phosphoenolpyruvate synthase regulatory protein (270 aa).

Residue 149-156 coordinates ADP; that stretch reads GVSRSGKT.

It belongs to the pyruvate, phosphate/water dikinase regulatory protein family. PSRP subfamily.

The catalysed reaction is [pyruvate, water dikinase] + ADP = [pyruvate, water dikinase]-phosphate + AMP + H(+). It carries out the reaction [pyruvate, water dikinase]-phosphate + phosphate + H(+) = [pyruvate, water dikinase] + diphosphate. Its function is as follows. Bifunctional serine/threonine kinase and phosphorylase involved in the regulation of the phosphoenolpyruvate synthase (PEPS) by catalyzing its phosphorylation/dephosphorylation. In Alteromonas mediterranea (strain DSM 17117 / CIP 110805 / LMG 28347 / Deep ecotype), this protein is Putative phosphoenolpyruvate synthase regulatory protein.